The primary structure comprises 911 residues: Transcription factor E2F7 (911 aa).

Phosphoserine is present on serine 94. The DNA-binding element occupies 141–210 (RKQKSLGLLC…VAKNQYSWHG (70 aa)). Disordered stretches follow at residues 239-281 (QKEL…ANSR), 409-433 (SFNS…PYRQ), and 565-706 (SPGS…SPLQ). Over residues 243–257 (NPIDHKSGERRRDGC) the composition is skewed to basic and acidic residues. Residues 281–366 (RKDKSLKIMS…GRKPAFKWIG (86 aa)) mediate DNA binding. Serine 409 carries the phosphoserine modification. A compositionally biased stretch (basic and acidic residues) spans 415–424 (ASERTQRKVN). Positions 566–579 (PGSGSGSGSVGGGS) are enriched in gly residues. Residues 599 to 621 (ERRLQEEEEEPATKRQCRDHEDG) show a composition bias toward basic and acidic residues. A compositionally biased stretch (polar residues) spans 669 to 687 (KATTNGFVSSEWGNPCSNT). Residues 688 to 698 (EIEKPSEENES) show a composition bias toward basic and acidic residues. Serine 840 carries the phosphoserine modification. The disordered stretch occupies residues 873 to 911 (FFKTPGSLGDPVLRRKERNQSRSSSSAQRRLEISSGGTD).

Belongs to the E2F/DP family. In terms of assembly, homodimer and heterodimer: mainly forms homodimers and, to a lesser extent, heterodimers with E2F8. Dimerization is important for DNA-binding. Interacts with HIF1A. Interacts with MN1.

It localises to the nucleus. Functionally, atypical E2F transcription factor that participates in various processes such as angiogenesis, polyploidization of specialized cells and DNA damage response. Mainly acts as a transcription repressor that binds DNA independently of DP proteins and specifically recognizes the E2 recognition site 5'-TTTC[CG]CGC-3'. Directly represses transcription of classical E2F transcription factors such as E2F1. Acts as a regulator of S-phase by recognizing and binding the E2-related site 5'-TTCCCGCC-3' and mediating repression of G1/S-regulated genes. Plays a key role in polyploidization of cells in placenta and liver by regulating the endocycle, probably by repressing genes promoting cytokinesis and antagonizing action of classical E2F proteins (E2F1, E2F2 and/or E2F3). Required for placental development by promoting polyploidization of trophoblast giant cells. Also involved in DNA damage response: up-regulated by p53/TP53 following genotoxic stress and acts as a downstream effector of p53/TP53-dependent repression by mediating repression of indirect p53/TP53 target genes involved in DNA replication. Acts as a promoter of sprouting angiogenesis, possibly by acting as a transcription activator: associates with HIF1A, recognizes and binds the VEGFA promoter, which is different from canonical E2 recognition site, and activates expression of the VEGFA gene. Acts as a negative regulator of keratinocyte differentiation. The protein is Transcription factor E2F7 (E2F7) of Bos taurus (Bovine).